We begin with the raw amino-acid sequence, 487 residues long: L-tartrate/succinate antiporter (487 aa).

Residues 1-9 (MKPSTEWWR) are Periplasmic-facing. The chain crosses the membrane as a helical span at residues 10–30 (YLAPLAVIAIIALLPVPAGLE). The Cytoplasmic portion of the chain corresponds to 31–32 (NH). Transmembrane regions (helical) follow at residues 33–53 (TWLYFAVFTGVIVGLILEPVP) and 54–74 (GAVVAMVGISIIAILSPWLLF). Residues 75-92 (SPEQLAQPGFKFTAKSLS) are Cytoplasmic-facing. A helical membrane pass occupies residues 93-113 (WAVSGFSNSVIWLIFAAFMFG). The Periplasmic portion of the chain corresponds to 114 to 136 (TGYEKTGLGRRIALILVKKMGHR). A helical transmembrane segment spans residues 137–157 (TLFLGYAVMFSELILAPVTPS). Topologically, residues 158–188 (NSARGAGIIYPIIRNLPPLYQSQPNDSSSRS) are cytoplasmic. A helical membrane pass occupies residues 189 to 209 (IGSYIMWMGIVADCVTSAIFL). Topologically, residues 210–235 (TAMAPNLLLIGLMKSASHATLSWGDW) are periplasmic. A helical membrane pass occupies residues 236–256 (FLGMLPLSILLVLLVPWLAYV). Residues 257 to 291 (LYPPVLKSGDQVPRWAETELQAMGPLCSREKRMLG) are Cytoplasmic-facing. 2 consecutive transmembrane segments (helical) span residues 292–312 (LMVGALVLWIFGGDYIDAAMV) and 313–333 (GYSVVALMLLLRIISWDDIVS). At 334–339 (NKAAWN) the chain is on the cytoplasmic side. The chain crosses the membrane as a helical span at residues 340–360 (VFFWLASLITLATGLNNTGFI). Over 361–369 (SWFGKLLAG) the chain is Periplasmic. A helical membrane pass occupies residues 370–390 (SLSGYSPTMVMVALIVVFYLL). Residues 391–392 (RY) are Cytoplasmic-facing. A helical membrane pass occupies residues 393–413 (FFASATAYTSALAPMMIAAAL). The Periplasmic portion of the chain corresponds to 414 to 417 (AMPE). A helical membrane pass occupies residues 418–438 (IPLPVFCLMVGAAIGLGSILT). The Cytoplasmic segment spans residues 439 to 464 (PYATGPSPIYYGSGYLPTADYWRLGA). Residues 465 to 485 (IFGLIFLVLLVITGLLWMPVV) traverse the membrane as a helical segment. Over 486-487 (LL) the chain is Periplasmic.

The protein belongs to the SLC13A/DASS transporter (TC 2.A.47) family. DIT1 subfamily.

Its subcellular location is the cell inner membrane. The enzyme catalyses (2R,3R)-tartrate(out) + succinate(in) = (2R,3R)-tartrate(in) + succinate(out). Its function is as follows. Catalyzes the uptake of tartrate in exchange for intracellular succinate. Essential for anaerobic L-tartrate fermentation. The protein is L-tartrate/succinate antiporter of Escherichia coli (strain K12).